The primary structure comprises 292 residues: Large ribosomal subunit protein uL4 (292 aa).

Basic and acidic residues-rich tracts occupy residues 1–33 (MVEVKKTTKTKSTEEKAPKITKATKEKTSDKTA) and 42–51 (KVSDKAESTP). 2 disordered regions span residues 1–59 (MVEV…VKTS) and 132–158 (GTHKVKNRAEVSGTGKKPWKQKGTGKA).

The protein belongs to the universal ribosomal protein uL4 family. In terms of assembly, part of the 50S ribosomal subunit.

One of the primary rRNA binding proteins, this protein initially binds near the 5'-end of the 23S rRNA. It is important during the early stages of 50S assembly. It makes multiple contacts with different domains of the 23S rRNA in the assembled 50S subunit and ribosome. Its function is as follows. Forms part of the polypeptide exit tunnel. The protein is Large ribosomal subunit protein uL4 of Mycoplasmopsis pulmonis (strain UAB CTIP) (Mycoplasma pulmonis).